Consider the following 488-residue polypeptide: Ribulose bisphosphate carboxylase large chain (488 aa).

Positions 127 and 177 each coordinate substrate. K179 serves as the catalytic Proton acceptor. K181 lines the substrate pocket. 3 residues coordinate Mg(2+): K205, D207, and E208. An N6-carboxylysine modification is found at K205. The Proton acceptor role is filled by H297. Residues R298, H330, and S382 each contribute to the substrate site.

The protein belongs to the RuBisCO large chain family. Type I subfamily. Heterohexadecamer of 8 large chains and 8 small chains. Mg(2+) serves as cofactor.

It is found in the plastid. Its subcellular location is the chloroplast. The catalysed reaction is 2 (2R)-3-phosphoglycerate + 2 H(+) = D-ribulose 1,5-bisphosphate + CO2 + H2O. It catalyses the reaction D-ribulose 1,5-bisphosphate + O2 = 2-phosphoglycolate + (2R)-3-phosphoglycerate + 2 H(+). Its function is as follows. RuBisCO catalyzes two reactions: the carboxylation of D-ribulose 1,5-bisphosphate, the primary event in carbon dioxide fixation, as well as the oxidative fragmentation of the pentose substrate in the photorespiration process. Both reactions occur simultaneously and in competition at the same active site. The polypeptide is Ribulose bisphosphate carboxylase large chain (Antithamnion sp. (Red alga)).